The chain runs to 542 residues: Chaperonin GroEL 2 (542 aa).

ATP is bound by residues 30–33 (TLGP), K51, 87–91 (DGTTT), G415, and D496.

Belongs to the chaperonin (HSP60) family. In terms of assembly, forms a cylinder of 14 subunits composed of two heptameric rings stacked back-to-back. Interacts with the co-chaperonin GroES.

It localises to the cytoplasm. It carries out the reaction ATP + H2O + a folded polypeptide = ADP + phosphate + an unfolded polypeptide.. In terms of biological role, together with its co-chaperonin GroES, plays an essential role in assisting protein folding. The GroEL-GroES system forms a nano-cage that allows encapsulation of the non-native substrate proteins and provides a physical environment optimized to promote and accelerate protein folding. This Sinorhizobium fredii (strain NBRC 101917 / NGR234) protein is Chaperonin GroEL 2.